The following is a 457-amino-acid chain: Bifunctional protein GlmU (457 aa).

Residues 1–230 (MSKRYAVVLA…FEESLGVNDR (230 aa)) form a pyrophosphorylase region. Residues 9–12 (LAAG), Lys-23, Gln-73, and 78–79 (GT) contribute to the UDP-N-acetyl-alpha-D-glucosamine site. Asp-103 contributes to the Mg(2+) binding site. Gly-140, Glu-155, Asn-170, and Asn-228 together coordinate UDP-N-acetyl-alpha-D-glucosamine. Residue Asn-228 participates in Mg(2+) binding. Positions 231–251 (IALAEASKLMQRRINENHMRN) are linker. Residues 252 to 457 (GVTLVNPEST…GYAKHLNHGK (206 aa)) form an N-acetyltransferase region. Residues Arg-333 and Lys-351 each coordinate UDP-N-acetyl-alpha-D-glucosamine. Residue His-363 is the Proton acceptor of the active site. Residues Tyr-366 and Asn-377 each coordinate UDP-N-acetyl-alpha-D-glucosamine. Acetyl-CoA-binding positions include 386-387 (NY), Ala-423, and Arg-440.

In the N-terminal section; belongs to the N-acetylglucosamine-1-phosphate uridyltransferase family. The protein in the C-terminal section; belongs to the transferase hexapeptide repeat family. In terms of assembly, homotrimer. The cofactor is Mg(2+).

The protein resides in the cytoplasm. It catalyses the reaction alpha-D-glucosamine 1-phosphate + acetyl-CoA = N-acetyl-alpha-D-glucosamine 1-phosphate + CoA + H(+). It carries out the reaction N-acetyl-alpha-D-glucosamine 1-phosphate + UTP + H(+) = UDP-N-acetyl-alpha-D-glucosamine + diphosphate. It participates in nucleotide-sugar biosynthesis; UDP-N-acetyl-alpha-D-glucosamine biosynthesis; N-acetyl-alpha-D-glucosamine 1-phosphate from alpha-D-glucosamine 6-phosphate (route II): step 2/2. The protein operates within nucleotide-sugar biosynthesis; UDP-N-acetyl-alpha-D-glucosamine biosynthesis; UDP-N-acetyl-alpha-D-glucosamine from N-acetyl-alpha-D-glucosamine 1-phosphate: step 1/1. It functions in the pathway bacterial outer membrane biogenesis; LPS lipid A biosynthesis. Functionally, catalyzes the last two sequential reactions in the de novo biosynthetic pathway for UDP-N-acetylglucosamine (UDP-GlcNAc). The C-terminal domain catalyzes the transfer of acetyl group from acetyl coenzyme A to glucosamine-1-phosphate (GlcN-1-P) to produce N-acetylglucosamine-1-phosphate (GlcNAc-1-P), which is converted into UDP-GlcNAc by the transfer of uridine 5-monophosphate (from uridine 5-triphosphate), a reaction catalyzed by the N-terminal domain. The polypeptide is Bifunctional protein GlmU (Listeria monocytogenes serotype 4a (strain HCC23)).